Consider the following 754-residue polypeptide: 1,4-alpha-glucan branching enzyme GlgB (754 aa).

The active-site Nucleophile is aspartate 431. The active-site Proton donor is glutamate 484.

Belongs to the glycosyl hydrolase 13 family. GlgB subfamily. As to quaternary structure, monomer.

The catalysed reaction is Transfers a segment of a (1-&gt;4)-alpha-D-glucan chain to a primary hydroxy group in a similar glucan chain.. Its pathway is glycan biosynthesis; glycogen biosynthesis. Catalyzes the formation of the alpha-1,6-glucosidic linkages in glycogen by scission of a 1,4-alpha-linked oligosaccharide from growing alpha-1,4-glucan chains and the subsequent attachment of the oligosaccharide to the alpha-1,6 position. The sequence is that of 1,4-alpha-glucan branching enzyme GlgB from Prochlorococcus marinus (strain AS9601).